The primary structure comprises 176 residues: Bifunctional protein PyrR (176 aa).

Positions 93-105 (VILVDDVLYTGRT) match the PRPP-binding motif.

This sequence belongs to the purine/pyrimidine phosphoribosyltransferase family. PyrR subfamily. Homodimer and homohexamer; in equilibrium.

The catalysed reaction is UMP + diphosphate = 5-phospho-alpha-D-ribose 1-diphosphate + uracil. Regulates transcriptional attenuation of the pyrimidine nucleotide (pyr) operon by binding in a uridine-dependent manner to specific sites on pyr mRNA. This disrupts an antiterminator hairpin in the RNA and favors formation of a downstream transcription terminator, leading to a reduced expression of downstream genes. Its function is as follows. Also displays a weak uracil phosphoribosyltransferase activity which is not physiologically significant. In Streptococcus mutans serotype c (strain ATCC 700610 / UA159), this protein is Bifunctional protein PyrR.